A 292-amino-acid chain; its full sequence is 4-hydroxy-tetrahydrodipicolinate synthase (292 aa).

Thr45 is a binding site for pyruvate. Tyr133 serves as the catalytic Proton donor/acceptor. The Schiff-base intermediate with substrate role is filled by Lys162. A pyruvate-binding site is contributed by Ile204.

It belongs to the DapA family. As to quaternary structure, homotetramer; dimer of dimers.

It is found in the cytoplasm. The catalysed reaction is L-aspartate 4-semialdehyde + pyruvate = (2S,4S)-4-hydroxy-2,3,4,5-tetrahydrodipicolinate + H2O + H(+). The protein operates within amino-acid biosynthesis; L-lysine biosynthesis via DAP pathway; (S)-tetrahydrodipicolinate from L-aspartate: step 3/4. Its function is as follows. Catalyzes the condensation of (S)-aspartate-beta-semialdehyde [(S)-ASA] and pyruvate to 4-hydroxy-tetrahydrodipicolinate (HTPA). The protein is 4-hydroxy-tetrahydrodipicolinate synthase of Maridesulfovibrio salexigens (strain ATCC 14822 / DSM 2638 / NCIMB 8403 / VKM B-1763) (Desulfovibrio salexigens).